Consider the following 222-residue polypeptide: MAAPSEVAAAVLGEGDGGAFGSWLDGRLEALGVDRAVYAAYILGVLQEEEEEEKLDALQGILSAFLEEESLLDICKEIVERWSETRDVTTKVKKEDEVQAIATLIEKQAQIVVKPRVVSEEEKQRKAALLAQYADVTDEEDEADKKDDAGASTANVSSDRTLFRNTNVEDVLNARKLERDSLRDESQRKKEQDKLQREKDKLAKQERKEKEKKRTQKGERKR.

K93 participates in a covalent cross-link: Glycyl lysine isopeptide (Lys-Gly) (interchain with G-Cter in SUMO1). A coiled-coil region spans residues 119–143 (SEEEKQRKAALLAQYADVTDEEDEA). The tract at residues 136 to 222 (VTDEEDEADK…KRTQKGERKR (87 aa)) is disordered. The residue at position 137 (T137) is a Phosphothreonine. Residues 152-168 (STANVSSDRTLFRNTNV) are compositionally biased toward polar residues. The segment covering 172–209 (LNARKLERDSLRDESQRKKEQDKLQREKDKLAKQERKE) has biased composition (basic and acidic residues). Positions 175-217 (RKLERDSLRDESQRKKEQDKLQREKDKLAKQERKEKEKKRTQK) form a coiled coil. Residues 210–222 (KEKKRTQKGERKR) are compositionally biased toward basic residues.

Belongs to the CCDC43 family.

In Mus musculus (Mouse), this protein is Coiled-coil domain-containing protein 43 (Ccdc43).